A 519-amino-acid polypeptide reads, in one-letter code: Cilia- and flagella-associated protein 53 (519 aa).

Coiled-coil stretches lie at residues 80–107 (NRHL…LLES) and 210–339 (LAKE…QEEQ). A disordered region spans residues 498–519 (TTAVHPFRRRDRRCSSSGGQMS).

This sequence belongs to the CFAP53 family.

The protein resides in the cytoplasm. The protein localises to the cytoskeleton. It localises to the cilium axoneme. It is found in the cilium basal body. In terms of biological role, microtubule inner protein (MIP) part of the dynein-decorated doublet microtubules (DMTs) in cilia axoneme, which is required for motile cilia beating. Regulates motility patterns of both 9+0 and 9+2 motile cilia through differential localization and recruitment of axonemal dynein components. Required for cilium motility within the spinal canal and Kuppfer's vesicle and is involved in the establishment of left-right symmetry during embryogenesis. This chain is Cilia- and flagella-associated protein 53, found in Danio rerio (Zebrafish).